The primary structure comprises 998 residues: 2-imino-3-(indol-3-yl)propanoate dimerase (998 aa).

It carries out the reaction 2 H2O2 = O2 + 2 H2O. It catalyses the reaction 2 2-iminio-3-(indol-3-yl)propanoate + H2O2 = indole-3-pyruvate imine dimer + 2 H2O. Its pathway is pigment biosynthesis; violacein biosynthesis. Catalyzes the hydrogen peroxide-dependent dimerization of two L-tryptophan-derived molecules (imine form of indole 3-pyruvate (IPA)), to form an uncharacterized product suggested to be indole-3-pyruvate imine dimer that can spontaneously convert into dichlorochromopyrrolate (CPA). The uncharacterized product is the substrate of VioE. This is 2-imino-3-(indol-3-yl)propanoate dimerase (vioB) from Chromobacterium violaceum (strain ATCC 12472 / DSM 30191 / JCM 1249 / CCUG 213 / NBRC 12614 / NCIMB 9131 / NCTC 9757 / MK).